Reading from the N-terminus, the 380-residue chain is 12-oxophytodienoate reductase 1 (380 aa).

FMN-binding positions include 35 to 37 (PLT), Ala68, and Gln110. 182–185 (HGAH) contributes to the substrate binding site. Residue Tyr187 is the Proton donor of the active site. Arg234 serves as a coordination point for FMN. Position 275 (Arg275) interacts with substrate. FMN contacts are provided by residues Gly305 and 326–327 (GR).

The protein belongs to the NADH:flavin oxidoreductase/NADH oxidase family. Requires FMN as cofactor.

It catalyses the reaction (1S,2S)-OPC-8 + NADP(+) = (9S,13S,15Z)-12-oxophyto-10,15-dienoate + NADPH + H(+). It functions in the pathway lipid metabolism; oxylipin biosynthesis. Probably involved in the biosynthesis or metabolism of oxylipin signaling molecules. In vitro, reduces cis(-)-12-oxophytodienoic acid (cis(-)-OPDA) and to cis(-)-OPC-8:0. The protein is 12-oxophytodienoate reductase 1 of Oryza sativa subsp. japonica (Rice).